A 92-amino-acid chain; its full sequence is Cell division protein FtsB (92 aa).

Topologically, residues 1 to 3 are cytoplasmic; that stretch reads MRL. The helical transmembrane segment at 4–21 threads the bilayer; it reads LILILLSVLVLFQYNFWF. At 22–92 the chain is on the periplasmic side; that stretch reads GSNGFLDYRQ…VFYHIVKESK (71 aa). Residues 28-63 adopt a coiled-coil conformation; that stretch reads DYRQNAEKIKENQAENEKLSQRNQRINAEIQGLTKG.

Belongs to the FtsB family. In terms of assembly, part of a complex composed of FtsB, FtsL and FtsQ.

The protein localises to the cell inner membrane. Its function is as follows. Essential cell division protein. May link together the upstream cell division proteins, which are predominantly cytoplasmic, with the downstream cell division proteins, which are predominantly periplasmic. The polypeptide is Cell division protein FtsB (Haemophilus influenzae (strain 86-028NP)).